Consider the following 258-residue polypeptide: Protease HtpX homolog (258 aa).

Transmembrane regions (helical) follow at residues 24–44 and 45–65; these read VLLFGLIYAILMVVGSILGLG and GPLFYALLGFGVIFLQYLISP. H146 serves as a coordination point for Zn(2+). E147 is a catalytic residue. H150 contributes to the Zn(2+) binding site. 2 helical membrane passes run 157–177 and 186–206; these read IVMTLVSAVPLICYYIFWSTV and LVGIAALIAYFIGQLIVLFIS. E210 is a Zn(2+) binding site.

Belongs to the peptidase M48B family. The cofactor is Zn(2+).

It is found in the cell membrane. The sequence is that of Protease HtpX homolog from Methanothermobacter thermautotrophicus (strain ATCC 29096 / DSM 1053 / JCM 10044 / NBRC 100330 / Delta H) (Methanobacterium thermoautotrophicum).